A 619-amino-acid chain; its full sequence is ATP-dependent zinc metalloprotease FtsH (619 aa).

Residues 1-5 (MKYFK) lie on the Cytoplasmic side of the membrane. A helical transmembrane segment spans residues 6–26 (GISFYIIIFILILVIITFFTA). The Extracellular portion of the chain corresponds to 27–110 (TDNPPKMSYS…VTQPPQPPWW (84 aa)). A helical membrane pass occupies residues 111–131 (VSMLPTVGLVIILILIWFFFI). Topologically, residues 132-619 (QQSQGGGGGN…GSSQTPQLEG (488 aa)) are cytoplasmic. Residue 204–211 (GPPGTGKT) coordinates ATP. His-426 contributes to the Zn(2+) binding site. Residue Glu-427 is part of the active site. Zn(2+) is bound by residues His-430 and Asp-502.

In the central section; belongs to the AAA ATPase family. This sequence in the C-terminal section; belongs to the peptidase M41 family. As to quaternary structure, homohexamer. Zn(2+) serves as cofactor.

It localises to the cell membrane. Functionally, acts as a processive, ATP-dependent zinc metallopeptidase for both cytoplasmic and membrane proteins. Plays a role in the quality control of integral membrane proteins. This chain is ATP-dependent zinc metalloprotease FtsH, found in Ruminiclostridium cellulolyticum (strain ATCC 35319 / DSM 5812 / JCM 6584 / H10) (Clostridium cellulolyticum).